The sequence spans 248 residues: Ribosomal RNA small subunit methyltransferase A (248 aa).

6 residues coordinate S-adenosyl-L-methionine: H11, L13, G38, E60, D83, and N101.

This sequence belongs to the class I-like SAM-binding methyltransferase superfamily. rRNA adenine N(6)-methyltransferase family. RsmA subfamily.

It localises to the cytoplasm. The enzyme catalyses adenosine(1518)/adenosine(1519) in 16S rRNA + 4 S-adenosyl-L-methionine = N(6)-dimethyladenosine(1518)/N(6)-dimethyladenosine(1519) in 16S rRNA + 4 S-adenosyl-L-homocysteine + 4 H(+). Functionally, specifically dimethylates two adjacent adenosines (A1518 and A1519) in the loop of a conserved hairpin near the 3'-end of 16S rRNA in the 30S particle. May play a critical role in biogenesis of 30S subunits. The chain is Ribosomal RNA small subunit methyltransferase A from Aquifex aeolicus (strain VF5).